The following is a 216-amino-acid chain: Probable glutamine ABC transporter permease protein GlnM (216 aa).

One can recognise an ABC transmembrane type-1 domain in the interval 17–205; it reads FYHTLLASVI…VLTIPLSIGV (189 aa). 5 helical membrane-spanning segments follow: residues 21–41, 63–83, 85–105, 132–152, and 181–201; these read LLAS…VAVM, IPLL…GLRL, GFQA…AEAI, LHII…NQFL, and LVVF…TIPL.

It belongs to the binding-protein-dependent transport system permease family. The complex is composed of two ATP-binding proteins (GlnQ), two transmembrane proteins (GlnM and GlnP) and a solute-binding protein (GlnH).

Its subcellular location is the cell membrane. Part of the ABC transporter complex GlnHMPQ involved in glutamine transport. Probably responsible for the translocation of the substrate across the membrane. In Bacillus subtilis (strain 168), this protein is Probable glutamine ABC transporter permease protein GlnM (glnM).